A 119-amino-acid polypeptide reads, in one-letter code: Protein Wnt-4 (119 aa).

Serine 1 carries the O-palmitoleoyl serine; by PORCN lipid modification. 2 disulfide bridges follow: cysteine 69–cysteine 100 and cysteine 85–cysteine 95. Asparagine 86 is a glycosylation site (N-linked (GlcNAc...) asparagine).

Belongs to the Wnt family. Palmitoleoylation is required for efficient binding to frizzled receptors. Depalmitoleoylation leads to Wnt signaling pathway inhibition.

It is found in the secreted. Its subcellular location is the extracellular space. It localises to the extracellular matrix. Its function is as follows. Ligand for members of the frizzled family of seven transmembrane receptors. Plays an important role in embryonic development. This chain is Protein Wnt-4 (WNT4), found in Meleagris gallopavo (Wild turkey).